Here is a 142-residue protein sequence, read N- to C-terminus: uncharacterized protein (142 aa).

An N-acetyltransferase domain is found at 1–120 (MADKFDANDE…TILKWEKNMD (120 aa)).

Belongs to the acetyltransferase family.

This is an uncharacterized protein from Streptococcus pyogenes serotype M1.